Consider the following 280-residue polypeptide: MDFILLIFLSGVFLPNIFSLQPTVEQDPGVTISDDQYYDEEENNTDENSAIFQKLEDNGGDTPANEKTGNYYKDIKQYVFTTPDSKGTKTEVSVTATTDLKFTMKDYKSSKATASGEEDKRSEPSRKSSTPNVPAFWTMLAKAINETAVSMDDKDLFYQAIPASDLNSTNEDQLSELEEIKLKLMLGISLMTLILLIPLLIFCFATLYKLRHLRDKTCESQYSVNPELATLSYFHPSEGSNQTVLTEESSFLPPEESGKVVIIESNTVNEAEVTEERISE.

The first 19 residues, 1-19 (MDFILLIFLSGVFLPNIFS), serve as a signal peptide directing secretion. Topologically, residues 20 to 183 (LQPTVEQDPG…LSELEEIKLK (164 aa)) are vesicular. Positions 112–131 (ATASGEEDKRSEPSRKSSTP) are disordered. A compositionally biased stretch (basic and acidic residues) spans 117–126 (EEDKRSEPSR). N-linked (GlcNAc...) asparagine glycosylation is present at asparagine 145. Residues 184–204 (LMLGISLMTLILLIPLLIFCF) traverse the membrane as a helical segment. At 205 to 280 (ATLYKLRHLR…AEVTEERISE (76 aa)) the chain is on the cytoplasmic side. At serine 279 the chain carries Phosphoserine.

As to quaternary structure, interacts with SNAP25. Highly N- and O-glycosylated; contains sialic acid. Highly expressed in testis and epididymis. Low expression in other tissues.

It is found in the cytoplasmic vesicle. The protein localises to the secretory vesicle. Its subcellular location is the acrosome membrane. The protein resides in the acrosome inner membrane. It localises to the acrosome outer membrane. Its function is as follows. Acrosomal membrane-anchored protein involved in the process of fertilization and in acrosome biogenesis. This Rattus norvegicus (Rat) protein is Equatorin (Eqtn).